Reading from the N-terminus, the 501-residue chain is Glutamyl-tRNA(Gln) amidotransferase subunit A (501 aa).

Active-site charge relay system residues include K80 and S155. The active-site Acyl-ester intermediate is S179.

The protein belongs to the amidase family. GatA subfamily. In terms of assembly, heterotrimer of A, B and C subunits.

The enzyme catalyses L-glutamyl-tRNA(Gln) + L-glutamine + ATP + H2O = L-glutaminyl-tRNA(Gln) + L-glutamate + ADP + phosphate + H(+). Functionally, allows the formation of correctly charged Gln-tRNA(Gln) through the transamidation of misacylated Glu-tRNA(Gln) in organisms which lack glutaminyl-tRNA synthetase. The reaction takes place in the presence of glutamine and ATP through an activated gamma-phospho-Glu-tRNA(Gln). In Cutibacterium acnes (strain DSM 16379 / KPA171202) (Propionibacterium acnes), this protein is Glutamyl-tRNA(Gln) amidotransferase subunit A.